The primary structure comprises 630 residues: Pro-interleukin-16 (630 aa).

Disordered stretches follow at residues 30–268 and 316–343; these read ENPG…FPLT and PKEG…ASDT. The segment covering 129–143 has biased composition (low complexity); sequence IRASSSSSIKQRISS. At Ser-220 the chain carries Phosphoserine. A compositionally biased stretch (polar residues) spans 321-343; that stretch reads SPTSSSNEDSAANGSAETSASDT. Residues 404–500 form an interaction with PPP1R12A, PPP1R12B and PPP1R12C region; the sequence is KQLDSIHVTI…IVTRKLTAES (97 aa). PDZ domains are found at residues 410–495 and 532–617; these read HVTI…VTRK and TVTL…IRRK.

Homotetramer. Pro-interleukin-16 interacts (via PDZ 2 domain) with PPP1R12A, PPP1R12B and PPP1R12C. Pro-interleukin-16 interacts with GRIN2A. Pro-interleukin-16 interacts with GABPB1. Pro-interleukin-16 interacts (via PDZ 3 domain) with HDAC3.

It is found in the secreted. Its subcellular location is the cytoplasm. It localises to the nucleus. Interleukin-16 stimulates a migratory response in CD4+ lymphocytes, monocytes, and eosinophils. Primes CD4+ T-cells for IL-2 and IL-15 responsiveness. Also induces T-lymphocyte expression of interleukin 2 receptor. Ligand for CD4. In terms of biological role, pro-interleukin-16 is involved in cell cycle progression in T-cells. Appears to be involved in transcriptional regulation of SKP2 and is probably part of a transcriptional repression complex on the core promoter of the SKP2 gene. May act as a scaffold for GABPB1 (the DNA-binding subunit the GABP transcription factor complex) and HDAC3 thus maintaining transcriptional repression and blocking cell cycle progression in resting T-cells. The chain is Pro-interleukin-16 (IL16) from Macaca fascicularis (Crab-eating macaque).